Reading from the N-terminus, the 548-residue chain is uncharacterized protein (548 aa).

The DhaL domain occupies 8 to 200 (KLFADMIIQG…LLCVYEGFLK (193 aa)).

This is an uncharacterized protein from Staphylococcus aureus (strain NCTC 8325 / PS 47).